The primary structure comprises 124 residues: Large ribosomal subunit protein bL12 (124 aa).

This sequence belongs to the bacterial ribosomal protein bL12 family. In terms of assembly, homodimer. Part of the ribosomal stalk of the 50S ribosomal subunit. Forms a multimeric L10(L12)X complex, where L10 forms an elongated spine to which 2 to 4 L12 dimers bind in a sequential fashion. Binds GTP-bound translation factors.

Its function is as follows. Forms part of the ribosomal stalk which helps the ribosome interact with GTP-bound translation factors. Is thus essential for accurate translation. The chain is Large ribosomal subunit protein bL12 from Burkholderia cenocepacia (strain HI2424).